The chain runs to 371 residues: Archaeal glycosylation protein Q (371 aa).

Residues 19 to 39 (QRSDGSMPAGHNGPYHDPETP) are disordered.

It is found in the cytoplasm. Its pathway is cell surface structure biogenesis; S-layer biogenesis. Putative isomerase involved in the N-glycosylation pathway. Required for the appearance of the methyl ester of hexuronic acid found at position four of the pentasaccharide N-linked to the S-layer glycoprotein. Either involved in preparing the third sugar for attachment of the fourth pentasaccharide subunit or processing the fourth sugar prior to its addition to the lipid-linked trisaccharide. The protein is Archaeal glycosylation protein Q (aglQ) of Haloferax volcanii (strain ATCC 29605 / DSM 3757 / JCM 8879 / NBRC 14742 / NCIMB 2012 / VKM B-1768 / DS2) (Halobacterium volcanii).